The chain runs to 448 residues: Argininosuccinate synthase (448 aa).

Residues 17–25 (AFSGGLDTS) and alanine 43 contribute to the ATP site. An L-citrulline-binding site is contributed by tyrosine 99. Residues glycine 129 and threonine 131 each coordinate ATP. Positions 131, 135, and 136 each coordinate L-aspartate. Asparagine 135 lines the L-citrulline pocket. Residue aspartate 136 participates in ATP binding. The L-citrulline site is built by arginine 139 and serine 192. Residue aspartate 194 participates in ATP binding. Threonine 201, glutamate 203, and glutamate 280 together coordinate L-citrulline.

This sequence belongs to the argininosuccinate synthase family. Type 2 subfamily. As to quaternary structure, homotetramer.

It localises to the cytoplasm. It carries out the reaction L-citrulline + L-aspartate + ATP = 2-(N(omega)-L-arginino)succinate + AMP + diphosphate + H(+). The protein operates within amino-acid biosynthesis; L-arginine biosynthesis; L-arginine from L-ornithine and carbamoyl phosphate: step 2/3. This is Argininosuccinate synthase from Enterobacter sp. (strain 638).